Reading from the N-terminus, the 1064-residue chain is WD repeat-containing protein on Y chromosome (1064 aa).

WD repeat units follow at residues glutamate 150–alanine 194, arginine 317–alanine 356, glycine 360–threonine 399, threonine 450–isoleucine 489, isoleucine 502–asparagine 541, phenylalanine 589–serine 629, lysine 742–serine 781, and glycine 825–leucine 864. The disordered stretch occupies residues serine 1022 to arginine 1044.

This Drosophila ananassae (Fruit fly) protein is WD repeat-containing protein on Y chromosome.